We begin with the raw amino-acid sequence, 141 residues long: Holo-[acyl-carrier-protein] synthase (141 aa).

Mg(2+)-binding residues include Asp-8 and Glu-63.

It belongs to the P-Pant transferase superfamily. AcpS family. The cofactor is Mg(2+).

The protein resides in the cytoplasm. The enzyme catalyses apo-[ACP] + CoA = holo-[ACP] + adenosine 3',5'-bisphosphate + H(+). Functionally, transfers the 4'-phosphopantetheine moiety from coenzyme A to a Ser of acyl-carrier-protein. This is Holo-[acyl-carrier-protein] synthase from Rhodospirillum centenum (strain ATCC 51521 / SW).